We begin with the raw amino-acid sequence, 859 residues long: Leucine--tRNA ligase (859 aa).

Residues 42–52 carry the 'HIGH' region motif; the sequence is PYPSGRLHMGH. A 'KMSKS' region motif is present at residues 618–622; it reads KMSKS. Lys621 is a binding site for ATP.

It belongs to the class-I aminoacyl-tRNA synthetase family.

Its subcellular location is the cytoplasm. The catalysed reaction is tRNA(Leu) + L-leucine + ATP = L-leucyl-tRNA(Leu) + AMP + diphosphate. This chain is Leucine--tRNA ligase, found in Shewanella baltica (strain OS185).